The primary structure comprises 545 residues: Light-independent protochlorophyllide reductase subunit N (545 aa).

Residues C102, C127, and C187 each contribute to the [4Fe-4S] cluster site.

Belongs to the BchN/ChlN family. Protochlorophyllide reductase is composed of three subunits; ChlL, ChlN and ChlB. Forms a heterotetramer of two ChlB and two ChlN subunits. [4Fe-4S] cluster is required as a cofactor.

The protein localises to the plastid. It is found in the chloroplast. The catalysed reaction is chlorophyllide a + oxidized 2[4Fe-4S]-[ferredoxin] + 2 ADP + 2 phosphate = protochlorophyllide a + reduced 2[4Fe-4S]-[ferredoxin] + 2 ATP + 2 H2O. It participates in porphyrin-containing compound metabolism; chlorophyll biosynthesis (light-independent). Functionally, component of the dark-operative protochlorophyllide reductase (DPOR) that uses Mg-ATP and reduced ferredoxin to reduce ring D of protochlorophyllide (Pchlide) to form chlorophyllide a (Chlide). This reaction is light-independent. The NB-protein (ChlN-ChlB) is the catalytic component of the complex. This Chlamydomonas reinhardtii (Chlamydomonas smithii) protein is Light-independent protochlorophyllide reductase subunit N.